Reading from the N-terminus, the 474-residue chain is MKLSMPRFDQAPVLVVGDVMLDRYWHGGTSRISPEAPVPVVKVDQIEDRPGGAANVALNIAALGAPASLVGVTGDDEAAESLANSLKAAGVLARFQRIANQPTIVKLRVISRHQQLLRIDFEEAFNTDPLALSAEVYSLLDGIKVLVLSDYGKGALRNHQALIQAARKRGIPVLADPKGKDFTIYRGASLITPNLSEFEAIVGHCEDEAQLVTKGAQLMQELDLGALLVTRGEHGMTLLRPDQQALHLPARAREVFDVTGAGDTVISTLAAAIAAGEELPHAVALANLAAGIVVGKLGTAAISAPELRRAIQREEGSERGVLGLEQLLLAVDDARAHKEKIVFTNGCFDILHAGHVTYLEQARALGDRLIVAVNDDASVSRLKGPGRPINSVDRRMAVLAGLGAVDWVISFPEGTPENLLSHVKPDVLVKGGDYGVDQVVGADIVQAYGGDVRVLGLVENSSTTAIVEKIRGQG.

Residues 1-318 (MKLSMPRFDQ…RAIQREEGSE (318 aa)) form a ribokinase region. Position 194-197 (194-197 (NLSE)) interacts with ATP. Residue D263 is part of the active site. Residues 343–474 (FTNGCFDILH…AIVEKIRGQG (132 aa)) form a cytidylyltransferase region.

This sequence in the N-terminal section; belongs to the carbohydrate kinase PfkB family. In the C-terminal section; belongs to the cytidylyltransferase family. As to quaternary structure, homodimer.

The enzyme catalyses D-glycero-beta-D-manno-heptose 7-phosphate + ATP = D-glycero-beta-D-manno-heptose 1,7-bisphosphate + ADP + H(+). The catalysed reaction is D-glycero-beta-D-manno-heptose 1-phosphate + ATP + H(+) = ADP-D-glycero-beta-D-manno-heptose + diphosphate. It participates in nucleotide-sugar biosynthesis; ADP-L-glycero-beta-D-manno-heptose biosynthesis; ADP-L-glycero-beta-D-manno-heptose from D-glycero-beta-D-manno-heptose 7-phosphate: step 1/4. It functions in the pathway nucleotide-sugar biosynthesis; ADP-L-glycero-beta-D-manno-heptose biosynthesis; ADP-L-glycero-beta-D-manno-heptose from D-glycero-beta-D-manno-heptose 7-phosphate: step 3/4. Catalyzes the phosphorylation of D-glycero-D-manno-heptose 7-phosphate at the C-1 position to selectively form D-glycero-beta-D-manno-heptose-1,7-bisphosphate. In terms of biological role, catalyzes the ADP transfer from ATP to D-glycero-beta-D-manno-heptose 1-phosphate, yielding ADP-D-glycero-beta-D-manno-heptose. This is Bifunctional protein HldE from Pseudomonas savastanoi pv. phaseolicola (strain 1448A / Race 6) (Pseudomonas syringae pv. phaseolicola (strain 1448A / Race 6)).